The primary structure comprises 648 residues: MARYAAGAVDCPGSPKSVRIVVVGDKGTGKSSLIVAAATDSFPPNVPPVLPDYKLPIEFFPDGIPVTIVDTSSRPEDRDIVAEELKRADAVVLTYACDRPETLERLSEYWLPELRRLEVKIPIIVAGCKLDFRDDNNQVSLEQVMSPIMQQFREIETCIECSALKQLQAQEVFYYAQKTVLHPTGPLFDQDSQALKPRCVRALKRIFILCDHDRDGALSEAELNDFQVKCFHAPLQPSEIEGVKRVVQEKLPEGVNERGLTVTGFLFLHALFIEKGRLETTWTVLRKFGYNNDIRLAEELLPSAIFKRAPDQSFELTNAAIDFLKGMYMLFDDDQDNNLRPQEIEDLFSTAPESPWKEAPYEDAAEKTALGGLSFDAFLSMWSLMTLLEPARSVENLIYIGFPGDPSTAIRVTRRRRLDRKKQQCERKVFQCFVFGPNNAGKSALLNCFLGRSYTDNQESTTDERYAVNMVDESGAKKTLIMREIPEDGVQGLFSSKESLAACDIAVFVYDSSDESSWKRATQLLVEVANYGEATGYEVPCLMVSAKDDLDSSPISIQESTRMTQDMGIEPPVSISSKLGDFNNLFRKILTAAQHPHLSIPETEAGKSRKHYNRLINRSLMAVSIGAAAVVVGLAAYRVYATRKSSSA.

The Cytoplasmic portion of the chain corresponds to 1 to 619 (MARYAAGAVD…KHYNRLINRS (619 aa)). Position 14 is a phosphoserine (Ser14). The 168-residue stretch at 15-182 (PKSVRIVVVG…FYYAQKTVLH (168 aa)) folds into the Miro 1 domain. 2 EF-hand domains span residues 198–233 (RCVR…CFHA) and 319–354 (AAID…APES). Ca(2+)-binding residues include Asp211, Asp213, Asp215, Glu222, Asp332, Asp334, Asp336, Asn338, and Glu343. A Miro 2 domain is found at 427-595 (RKVFQCFVFG…FRKILTAAQH (169 aa)). The helical transmembrane segment at 620-640 (LMAVSIGAAAVVVGLAAYRVY) threads the bilayer. Residues 641-648 (ATRKSSSA) lie on the Mitochondrial intermembrane side of the membrane.

It belongs to the mitochondrial Rho GTPase family. Expressed in roots, leaves, stems, flowers and siliques.

The protein resides in the mitochondrion outer membrane. Mitochondrial GTPase required to maintain proper development, morphology and intracellular distribution of mitochondria, which in turn are essential for the progress of embryonic cell division, development of haploid male and female gametes, and pollen tube growth. The sequence is that of Mitochondrial Rho GTPase 1 from Arabidopsis thaliana (Mouse-ear cress).